Reading from the N-terminus, the 1058-residue chain is Ubiquitin-like modifier-activating enzyme 1 (1058 aa).

The segment at Met-1–Glu-47 is disordered. An N-acetylserine modification is found at Ser-2. Phosphoserine is present on residues Ser-4, Ser-13, Ser-21, Ser-24, and Ser-46. Polar residues predominate over residues Ser-21 to Thr-38. Tyr-55 is subject to Phosphotyrosine. 2 tandem repeats follow at residues Gly-63–Phe-199 and Gly-459–Ile-611. Positions Gly-63 to Ile-611 are 2 approximate repeats. ATP contacts are provided by residues Ala-478, Asp-504, Arg-515, Lys-528, and Asp-576 to Asn-577. Lys-528 carries the post-translational modification N6-succinyllysine. Cys-632 serves as the catalytic Glycyl thioester intermediate. At Lys-671 the chain carries N6-acetyllysine. Thr-800 is modified (phosphothreonine). Phosphoserine is present on residues Ser-810, Ser-816, Ser-820, and Ser-835. N6-acetyllysine is present on Lys-980.

The protein belongs to the ubiquitin-activating E1 family. Monomer. In terms of tissue distribution, ubiquitous.

Its subcellular location is the cytoplasm. It is found in the mitochondrion. It localises to the nucleus. The catalysed reaction is ATP + ubiquitin + [E1 ubiquitin-activating enzyme]-L-cysteine = AMP + diphosphate + S-ubiquitinyl-[E1 ubiquitin-activating enzyme]-L-cysteine.. Its pathway is protein modification; protein ubiquitination. Functionally, catalyzes the first step in ubiquitin conjugation to mark cellular proteins for degradation through the ubiquitin-proteasome system. Activates ubiquitin by first adenylating its C-terminal glycine residue with ATP, and thereafter linking this residue to the side chain of a cysteine residue in E1, yielding a ubiquitin-E1 thioester and free AMP. Essential for the formation of radiation-induced foci, timely DNA repair and for response to replication stress. Promotes the recruitment of TP53BP1 and BRCA1 at DNA damage sites. The sequence is that of Ubiquitin-like modifier-activating enzyme 1 (UBA1) from Oryctolagus cuniculus (Rabbit).